A 226-amino-acid chain; its full sequence is Octanoyltransferase (226 aa).

The 184-residue stretch at 37–220 (GTAGELIWLL…SFSKVFGPVE (184 aa)) folds into the BPL/LPL catalytic domain. Residues 76–83 (RGGQFTYH), 151–153 (AIG), and 164–166 (GIS) each bind substrate. The active-site Acyl-thioester intermediate is Cys182.

It belongs to the LipB family.

Its subcellular location is the cytoplasm. It carries out the reaction octanoyl-[ACP] + L-lysyl-[protein] = N(6)-octanoyl-L-lysyl-[protein] + holo-[ACP] + H(+). It functions in the pathway protein modification; protein lipoylation via endogenous pathway; protein N(6)-(lipoyl)lysine from octanoyl-[acyl-carrier-protein]: step 1/2. Its function is as follows. Catalyzes the transfer of endogenously produced octanoic acid from octanoyl-acyl-carrier-protein onto the lipoyl domains of lipoate-dependent enzymes. Lipoyl-ACP can also act as a substrate although octanoyl-ACP is likely to be the physiological substrate. The polypeptide is Octanoyltransferase (Caulobacter vibrioides (strain ATCC 19089 / CIP 103742 / CB 15) (Caulobacter crescentus)).